The sequence spans 233 residues: Large ribosomal subunit protein uL1 (233 aa).

This sequence belongs to the universal ribosomal protein uL1 family. Part of the 50S ribosomal subunit.

Functionally, binds directly to 23S rRNA. The L1 stalk is quite mobile in the ribosome, and is involved in E site tRNA release. Its function is as follows. Protein L1 is also a translational repressor protein, it controls the translation of the L11 operon by binding to its mRNA. The protein is Large ribosomal subunit protein uL1 of Nautilia profundicola (strain ATCC BAA-1463 / DSM 18972 / AmH).